We begin with the raw amino-acid sequence, 277 residues long: 4-hydroxybenzoate octaprenyltransferase (277 aa).

Transmembrane regions (helical) follow at residues 24–44 (FAAA…LGVI), 81–101 (VEAK…DLSL), 102–122 (NQYA…YPFM), 129–149 (PQVV…GAVI), 152–172 (LPLT…AYDT), 201–221 (IIAL…WLSE), 224–244 (IGYF…CWLT), and 255–275 (AFLN…VGIY).

The protein belongs to the UbiA prenyltransferase family. The cofactor is Mg(2+).

Its subcellular location is the cell inner membrane. It catalyses the reaction all-trans-octaprenyl diphosphate + 4-hydroxybenzoate = 4-hydroxy-3-(all-trans-octaprenyl)benzoate + diphosphate. It functions in the pathway cofactor biosynthesis; ubiquinone biosynthesis. Its function is as follows. Catalyzes the prenylation of para-hydroxybenzoate (PHB) with an all-trans polyprenyl group. Mediates the second step in the final reaction sequence of ubiquinone-8 (UQ-8) biosynthesis, which is the condensation of the polyisoprenoid side chain with PHB, generating the first membrane-bound Q intermediate 3-octaprenyl-4-hydroxybenzoate. In Haemophilus ducreyi (strain 35000HP / ATCC 700724), this protein is 4-hydroxybenzoate octaprenyltransferase.